Consider the following 395-residue polypeptide: GPI-anchor transamidase (395 aa).

Residues 1–27 (MVGTWFLCRGFTTLAGLLLLPFGSLAA) form the signal peptide. Topologically, residues 28–368 (SQIEDQAEQF…PKLKDWHPPG (341 aa)) are lumenal. Ca(2+)-binding residues include aspartate 79, isoleucine 82, glutamate 118, and aspartate 120. The Proton donor role is filled by histidine 164. The active-site Nucleophile; acyl-thioester intermediate is the cysteine 206. Cysteine 206, serine 232, and serine 234 together coordinate a protein. Residues 231 to 236 (DSLSHQ) form an autoinhibitory loop region. A disulfide bond links cysteine 275 and cysteine 280. A helical membrane pass occupies residues 369–385 (GFILGLWALIIMVFFKT). At 386 to 395 (YGIKHMKFIF) the chain is on the cytoplasmic side.

Belongs to the peptidase C13 family. Heteropentamer. Part of the GPI-anchor transamidase complex, consisting of PIGK, PIGT, PIGS, PIGU and GAA1. Interacts with GPAA1. Interacts with PIGT; this interaction, via a disulfide link, stabilizes the expression of GAA1 and PIGK and links them to PIGS. The disulfide bond between PIGK/GPI8 and PIGT is important for normal enzyme activity.

The protein resides in the endoplasmic reticulum membrane. The protein operates within glycolipid biosynthesis; glycosylphosphatidylinositol-anchor biosynthesis. In the absence of proproteins substrates, exists in an inactive state with a disrupted catalytic site by an autoinhibitory loop. The binding of proprotein substrates, particularly the CSP region, to GPI-T triggers concerted conformational changes that alleviate the inhibition by the autoinhibitory loop. Meanwhile, proprotein residues near the omega- site induce the formation of a catalytic cleft for catalysis, following which the products are released and GPI-T reverts to the inactive state. Catalytic subunit of the glycosylphosphatidylinositol-anchor (GPI-anchor) transamidase (GPI-T) complex that catalyzes the formation of the linkage between a proprotein and a GPI-anchor and participates in GPI anchored protein biosynthesis. Recognizes diverse proproteins at a C-terminal signal peptide (CSP) region that lacks consensus sequence and replaces it with a GPI-anchor via a transamidation reaction. Transamidation catalysis reaction follows a two-phase mechanism. In the acyl-enzyme phase, the carbonyl group of the proproteins's omega-site undergoes a nucleophilic attack forming an enzyme-substrate thioester bond. Followed by a general acid catalysis that allows CSP releasing, regenerating the carbonyl, and forming the acyl-enzyme intermediate. In the GPI-anchor attachment phase, the amino group of the GPI-anchor's ethanolamine phosphate, the one on third mannose (EtNP3), mediates a nucleophilic attack on the carbonyl of the acyl-enzyme intermediate, replacing the CSP, allowing GPI-anchor attachment to the omega-residue, therefore forming the product and freeing the enzyme. This Sus scrofa (Pig) protein is GPI-anchor transamidase.